The chain runs to 2061 residues: Putative PWWP domain-containing DNA repair factor 4 (2061 aa).

10 disordered regions span residues 101–211 (TNLG…SRAR), 382–408 (ALGR…RSSV), 541–586 (TPGT…GDGS), 668–694 (PATL…GDGS), 864–910 (PTPG…SERS), 1046–1072 (PGTM…GDRS), 1159–1182 (ALHG…RGDS), 1205–1383 (KAIA…RDDK), 1521–1548 (PGAL…DSSP), and 1602–1726 (KKGK…KLAN). Composition is skewed to basic and acidic residues over residues 133-153 (PRED…KREN) and 162-173 (ESKRALRDDRSQ). A compositionally biased stretch (polar residues) spans 397–408 (TPGTLQGNRSSV). The span at 1051–1061 (GDSSTARTATA) shows a compositional bias: polar residues. Over residues 1364–1373 (DSSQVHTTIA) the composition is skewed to polar residues. Positions 1639–1648 (LKEETQDSRP) are enriched in basic and acidic residues. The span at 1656–1665 (PESSPFSGNI) shows a compositional bias: polar residues. Residues 1756-1817 (RGTMVWFKFQ…KHLDCKEKEK (62 aa)) enclose the PWWP domain.

Belongs to the PWWP3A family.

The chain is Putative PWWP domain-containing DNA repair factor 4 from Homo sapiens (Human).